Consider the following 505-residue polypeptide: Glutamate--tRNA ligase (505 aa).

Residues 12–22 carry the 'HIGH' region motif; the sequence is PSPTGDPHVGT. The short motif at 253-257 is the 'KMSKS' region element; it reads KLSKR. Residue K256 participates in ATP binding.

It belongs to the class-I aminoacyl-tRNA synthetase family. Glutamate--tRNA ligase type 1 subfamily. In terms of assembly, monomer.

It is found in the cytoplasm. It carries out the reaction tRNA(Glu) + L-glutamate + ATP = L-glutamyl-tRNA(Glu) + AMP + diphosphate. In terms of biological role, catalyzes the attachment of glutamate to tRNA(Glu) in a two-step reaction: glutamate is first activated by ATP to form Glu-AMP and then transferred to the acceptor end of tRNA(Glu). This is Glutamate--tRNA ligase from Chlamydia pneumoniae (Chlamydophila pneumoniae).